A 284-amino-acid chain; its full sequence is Small ribosomal subunit protein uS5z (284 aa).

Positions 1–19 (MAERGGEGGAERGGDRGDF) are enriched in basic and acidic residues. The disordered stretch occupies residues 1 to 51 (MAERGGEGGAERGGDRGDFGRGFGGGRGGGRGRDRGPRGRGRRGGRASEET). Gly residues predominate over residues 20 to 29 (GRGFGGGRGG). One can recognise an S5 DRBM domain in the interval 95–158 (LKDEVMKIMP…ILAKLSVVPV (64 aa)).

It belongs to the universal ribosomal protein uS5 family.

This chain is Small ribosomal subunit protein uS5z (RPS2A), found in Arabidopsis thaliana (Mouse-ear cress).